The sequence spans 309 residues: Testis-expressed protein 264 homolog (309 aa).

Residues Met1 to Asp3 lie on the Lumenal side of the membrane. A helical; Signal-anchor for type III membrane protein transmembrane segment spans residues Leu4–Phe24. Over Ala25–Glu309 the chain is Cytoplasmic. Residues Pro193–Glu309 are disordered. Over residues Ala208–Ser225 the composition is skewed to low complexity. Ser238 and Ser243 each carry phosphoserine. A compositionally biased stretch (basic and acidic residues) spans Gly250–Tyr262. Positions Ser263–Phe272 are enriched in low complexity. An LIR motif motif is present at residues Phe272 to Leu275.

In terms of assembly, interacts (via the LIR motif) with ATG8 family proteins MAP1LC3A, MAP1LC3B, GABARAP and GABARAPL1. Interacts with VCP/p97; bridging VCP/p97 to covalent DNA-protein cross-links (DPCs). Interacts with TOP1 (when sumoylated).

It is found in the endoplasmic reticulum membrane. The protein resides in the cytoplasmic vesicle. It localises to the autophagosome. Its subcellular location is the cytoplasm. The protein localises to the cytosol. It is found in the nucleus. The protein resides in the chromosome. In terms of biological role, major reticulophagy (also called ER-phagy) receptor that acts independently of other candidate reticulophagy receptors to remodel subdomains of the endoplasmic reticulum into autophagosomes upon nutrient stress, which then fuse with lysosomes for endoplasmic reticulum turnover. The ATG8-containing isolation membrane (IM) cradles a tubular segment of TEX264-positive ER near a three-way junction, allowing the formation of a synapse of 2 juxtaposed membranes with trans interaction between the TEX264 and ATG8 proteins. Expansion of the IM would extend the capture of ER, possibly through a 'zipper-like' process involving continued trans TEX264-ATG8 interactions, until poorly understood mechanisms lead to the fission of relevant membranes and, ultimately, autophagosomal membrane closure. Also involved in the repair of covalent DNA-protein cross-links (DPCs) during DNA synthesis: acts by bridging VCP/p97 to covalent DNA-protein cross-links (DPCs) and initiating resolution of DPCs by SPRTN. This Mus musculus (Mouse) protein is Testis-expressed protein 264 homolog.